A 418-amino-acid chain; its full sequence is AP-3 complex subunit mu-2 (418 aa).

The MHD domain maps to 176 to 417 (NNEAYFDVVE…MTKAGKFQVR (242 aa)).

The protein belongs to the adaptor complexes medium subunit family. In terms of assembly, adaptor protein complex 3 (AP-3) is a heterotetramer composed of two large adaptins (delta-type subunit AP3D1 and beta-type subunit AP3B1 or AP3B2), a medium adaptin (mu-type subunit AP3M1 or AP3M2) and a small adaptin (sigma-type subunit APS1 or AP3S2). AP-3 associates with the BLOC-1 complex.

The protein localises to the golgi apparatus. The protein resides in the cytoplasmic vesicle membrane. Its function is as follows. Component of the adaptor complexes which link clathrin to receptors in coated vesicles. Clathrin-associated protein complexes are believed to interact with the cytoplasmic tails of membrane proteins, leading to their selection and concentration. Ap47 is a subunit of the plasma membrane adaptor. In concert with the BLOC-1 complex, AP-3 is required to target cargos into vesicles assembled at cell bodies for delivery into neurites and nerve terminals. The chain is AP-3 complex subunit mu-2 (Ap3m2) from Mus musculus (Mouse).